The primary structure comprises 263 residues: Probable methylthioribulose-1-phosphate dehydratase (263 aa).

Cys-102 is a substrate binding site. Zn(2+) contacts are provided by His-120 and His-122. Catalysis depends on Glu-144, which acts as the Proton donor/acceptor. His-200 contacts Zn(2+).

The protein belongs to the aldolase class II family. MtnB subfamily. The cofactor is Zn(2+).

The protein localises to the cytoplasm. It catalyses the reaction 5-(methylsulfanyl)-D-ribulose 1-phosphate = 5-methylsulfanyl-2,3-dioxopentyl phosphate + H2O. It functions in the pathway amino-acid biosynthesis; L-methionine biosynthesis via salvage pathway; L-methionine from S-methyl-5-thio-alpha-D-ribose 1-phosphate: step 2/6. Catalyzes the dehydration of methylthioribulose-1-phosphate (MTRu-1-P) into 2,3-diketo-5-methylthiopentyl-1-phosphate (DK-MTP-1-P). The protein is Probable methylthioribulose-1-phosphate dehydratase of Caenorhabditis elegans.